We begin with the raw amino-acid sequence, 126 residues long: uncharacterized protein (126 aa).

The region spanning Ile-8–Tyr-106 is the HTH hxlR-type domain.

This is an uncharacterized protein from Bacillus subtilis (strain 168).